Consider the following 416-residue polypeptide: Serine hydroxymethyltransferase (416 aa).

Residues leucine 121 and 125–127 each bind (6S)-5,6,7,8-tetrahydrofolate; that span reads GHL. Position 229 is an N6-(pyridoxal phosphate)lysine (lysine 229).

It belongs to the SHMT family. As to quaternary structure, homodimer. The cofactor is pyridoxal 5'-phosphate.

The protein localises to the cytoplasm. It carries out the reaction (6R)-5,10-methylene-5,6,7,8-tetrahydrofolate + glycine + H2O = (6S)-5,6,7,8-tetrahydrofolate + L-serine. It participates in one-carbon metabolism; tetrahydrofolate interconversion. Its pathway is amino-acid biosynthesis; glycine biosynthesis; glycine from L-serine: step 1/1. In terms of biological role, catalyzes the reversible interconversion of serine and glycine with tetrahydrofolate (THF) serving as the one-carbon carrier. This reaction serves as the major source of one-carbon groups required for the biosynthesis of purines, thymidylate, methionine, and other important biomolecules. Also exhibits THF-independent aldolase activity toward beta-hydroxyamino acids, producing glycine and aldehydes, via a retro-aldol mechanism. This is Serine hydroxymethyltransferase from Neisseria gonorrhoeae (strain NCCP11945).